Reading from the N-terminus, the 165-residue chain is UPF0303 protein Bcep1808_1522 (165 aa).

The protein belongs to the UPF0303 family.

The polypeptide is UPF0303 protein Bcep1808_1522 (Burkholderia vietnamiensis (strain G4 / LMG 22486) (Burkholderia cepacia (strain R1808))).